A 183-amino-acid chain; its full sequence is ATP-dependent protease subunit HslV (183 aa).

Thr10 is an active-site residue. Residues Ala164, Cys167, and Thr170 each contribute to the Na(+) site.

Belongs to the peptidase T1B family. HslV subfamily. A double ring-shaped homohexamer of HslV is capped on each side by a ring-shaped HslU homohexamer. The assembly of the HslU/HslV complex is dependent on binding of ATP.

It is found in the cytoplasm. The catalysed reaction is ATP-dependent cleavage of peptide bonds with broad specificity.. Its activity is regulated as follows. Allosterically activated by HslU binding. In terms of biological role, protease subunit of a proteasome-like degradation complex believed to be a general protein degrading machinery. This is ATP-dependent protease subunit HslV from Rhizorhabdus wittichii (strain DSM 6014 / CCUG 31198 / JCM 15750 / NBRC 105917 / EY 4224 / RW1) (Sphingomonas wittichii).